We begin with the raw amino-acid sequence, 444 residues long: Probable D-serine dehydratase (444 aa).

Position 118 is an N6-(pyridoxal phosphate)lysine (lysine 118).

Belongs to the serine/threonine dehydratase family. DsdA subfamily. Requires pyridoxal 5'-phosphate as cofactor.

It catalyses the reaction D-serine = pyruvate + NH4(+). In Acinetobacter baumannii (strain ACICU), this protein is Probable D-serine dehydratase.